Consider the following 1934-residue polypeptide: Pyruvate dehydrogenase [NADP(+)] (1934 aa).

4Fe-4S ferredoxin-type domains follow at residues 710–739 (SIPIVDMNKCTQCNYCSIVCPHAAIRPFLL) and 767–796 (YRIQVTPLDCTGCELCVHACPDDALHMEGL). [4Fe-4S] cluster-binding residues include Cys-719, Cys-722, Cys-725, Cys-729, Cys-776, Cys-779, Cys-782, and Cys-786. One can recognise a Flavodoxin-like domain in the interval 1288 to 1438 (MHVLYGTETG…ELIEWLPDYL (151 aa)). The 259-residue stretch at 1501 to 1759 (PNSVLLPVIE…NIKASAFNLP (259 aa)) folds into the FAD-binding FR-type domain. FAD-binding positions include 1542-1553 (YCLGDSLALYGQ) and 1685-1695 (IKSRSYSIASC).

It in the N-terminal section; belongs to the pyruvate:ferredoxin/flavodoxin oxidoreductase family. Homodimer. The cofactor is FAD. FMN is required as a cofactor. It depends on thiamine diphosphate as a cofactor.

The catalysed reaction is pyruvate + NADP(+) + CoA = acetyl-CoA + CO2 + NADPH. May have an important role in respiratory metabolism. Cryptosporidium have a relic mitochondrion with no function in energy metabolism so it is not known if PFOR has a function. The sequence is that of Pyruvate dehydrogenase [NADP(+)] (PFOR) from Cryptosporidium parvum.